The chain runs to 465 residues: Glutamate--tRNA ligase (465 aa).

A 'HIGH' region motif is present at residues 11–21; it reads PSPTGFIHLGN. A 'KMSKS' region motif is present at residues 243–247; that stretch reads KMSKR. Lys-246 contributes to the ATP binding site.

The protein belongs to the class-I aminoacyl-tRNA synthetase family. Glutamate--tRNA ligase type 1 subfamily. Monomer.

The protein resides in the cytoplasm. It carries out the reaction tRNA(Glu) + L-glutamate + ATP = L-glutamyl-tRNA(Glu) + AMP + diphosphate. Catalyzes the attachment of glutamate to tRNA(Glu) in a two-step reaction: glutamate is first activated by ATP to form Glu-AMP and then transferred to the acceptor end of tRNA(Glu). This chain is Glutamate--tRNA ligase, found in Cupriavidus metallidurans (strain ATCC 43123 / DSM 2839 / NBRC 102507 / CH34) (Ralstonia metallidurans).